The chain runs to 310 residues: Putative S-adenosyl-L-methionine-dependent methyltransferase MMAR_0357 (310 aa).

Residues D132 and D161–L162 contribute to the S-adenosyl-L-methionine site.

It belongs to the UPF0677 family.

Exhibits S-adenosyl-L-methionine-dependent methyltransferase activity. The polypeptide is Putative S-adenosyl-L-methionine-dependent methyltransferase MMAR_0357 (Mycobacterium marinum (strain ATCC BAA-535 / M)).